The primary structure comprises 189 residues: Protein Flattop (189 aa).

The segment at 112–189 (EISGKPFDPD…PPPSPCKSTK (78 aa)) is disordered. Residues 137–148 (APNPTIIPSSPV) show a composition bias toward polar residues. Over residues 178–189 (NNPPPSPCKSTK) the composition is skewed to pro residues.

The protein belongs to the Flattop family. As to quaternary structure, microtubule inner protein component of sperm flagellar doublet microtubules. Interacts with DLG3. Expressed in mono- and multiciliated tissues during planar cell polarity acquisition.

It localises to the cytoplasm. It is found in the cytoskeleton. The protein localises to the cilium basal body. The protein resides in the cilium axoneme. Its subcellular location is the flagellum axoneme. It localises to the apical cell membrane. Functionally, microtubule inner protein (MIP) part of the dynein-decorated doublet microtubules (DMTs) in cilia axoneme. Acts as a regulator of cilium basal body docking and positioning in mono- and multiciliated cells. Regulates basal body docking and cilia formation in multiciliated lung cells. Regulates kinocilium positioning and stereocilia bundle morphogenesis in the inner ear. This Mus musculus (Mouse) protein is Protein Flattop.